The following is a 128-amino-acid chain: Large ribosomal subunit protein bL12 (128 aa).

This sequence belongs to the bacterial ribosomal protein bL12 family. Homodimer. Part of the ribosomal stalk of the 50S ribosomal subunit. Forms a multimeric L10(L12)X complex, where L10 forms an elongated spine to which 2 to 4 L12 dimers bind in a sequential fashion. Binds GTP-bound translation factors.

In terms of biological role, forms part of the ribosomal stalk which helps the ribosome interact with GTP-bound translation factors. Is thus essential for accurate translation. The polypeptide is Large ribosomal subunit protein bL12 (Trichormus variabilis (strain ATCC 29413 / PCC 7937) (Anabaena variabilis)).